A 474-amino-acid chain; its full sequence is E3 ubiquitin-protein ligase CBL-C (474 aa).

The tract at residues 7–145 is 4H; it reads PWGRQWEEAR…HALFPGGKYC (139 aa). Residues 7 to 321 form the Cbl-PTB domain; sequence PWGRQWEEAR…GKTHNPDLTE (315 aa). Residues 146 to 218 are EF-hand-like; sequence GHMYQLTKAP…FEFDVFTRLF (73 aa). The Ca(2+) site is built by aspartate 199, threonine 201, and glutamate 210. The segment at 219–321 is SH2-like; sequence QPWPTLLKNW…GKTHNPDLTE (103 aa). Arginine 264 is a 4-O-phospho-L-tyrosine binding site. The linker stretch occupies residues 322–350; sequence LGQAEPQQRIHVSEEQLQLYWAMDSTFEL. Tyrosine 341 is modified (phosphotyrosine; by SRC). The segment at 351 to 390 adopts an RING-type zinc-finger fold; sequence CKICAESNKDVKIEPCGHLLCSCCLAAWQHSDSQTCPFCR. An interaction with RET region spans residues 351–474; it reads CKICAESNKD…ALGPQDPAPA (124 aa). Residues 409-474 form a disordered region; that stretch reads TAEDSGNSSD…ALGPQDPAPA (66 aa). A compositionally biased stretch (pro residues) spans 432–441; that stretch reads SAPPLPPRPD.

Interacts with ubiquitin-conjugating enzyme E2 UBE2D2 and UBE2D3. Isoform 1 interacts with EGFR (tyrosine phosphorylated). Interacts with the SH3 domain proteins LYN and CRK. Interacts (via RING-type zinc finger) with TGFB1I1 (via LIM zinc-binding domain 2); the interaction is direct and enhances the E3 activity. Interacts directly with RET (inactive) and CD2AP; dissociates from RET upon RET activation by GDNF which also increases the interaction with CD2AP suggesting dissociation as CBLC:CD2AP complex. Interacts with SRC; the interaction is enhanced when SRC is phosphorylated at 'Tyr-419'. In terms of processing, phosphorylated on multiple tyrosine residues by SRC. Isoform 1, but not isoform 2, is phosphorylated on tyrosines by EGFR. Autoubiquitinated when phosphorylated at Tyr-341, enhanced by SRC; suggesting proteasomal degradation. In terms of tissue distribution, ubiquitous.

It carries out the reaction S-ubiquitinyl-[E2 ubiquitin-conjugating enzyme]-L-cysteine + [acceptor protein]-L-lysine = [E2 ubiquitin-conjugating enzyme]-L-cysteine + N(6)-ubiquitinyl-[acceptor protein]-L-lysine.. Its activity is regulated as follows. Phosphorylation at Tyr-341 is necessary and sufficient for the activation of E3 activity. In terms of biological role, acts as an E3 ubiquitin-protein ligase, which accepts ubiquitin from specific E2 ubiquitin-conjugating enzymes, and then transfers it to substrates promoting their degradation by the proteasome. Functionally coupled with the E2 ubiquitin-protein ligases UB2D1, UB2D2 and UB2D3. Regulator of EGFR mediated signal transduction; upon EGF activation, ubiquitinates EGFR. Isoform 1, but not isoform 2, inhibits EGF stimulated MAPK1 activation. Promotes ubiquitination of SRC phosphorylated at 'Tyr-419'. In collaboration with CD2AP may act as regulatory checkpoint for Ret signaling by modulating the rate of RET degradation after ligand activation; CD2AP converts it from an inhibitor to a promoter of RET degradation; the function limits the potency of GDNF on neuronal survival. This chain is E3 ubiquitin-protein ligase CBL-C (CBLC), found in Homo sapiens (Human).